A 138-amino-acid polypeptide reads, in one-letter code: MTAIYLMSMLFGLACGQAMSFCFPTEYTMHVERKECAYCLTINTTICAGYCMTRDINGKLFLPKYALSQDVCTYRDFMYKTVEIPGCPRHVTPYFSYPVAVSCKCGKCNTDYSDCIHEAIKTNYCTKPQKSYVVGFSI.

The first 20 residues, 1–20 (MTAIYLMSMLFGLACGQAMS), serve as a signal peptide directing secretion. 6 disulfide bridges follow: C22/C72, C36/C87, C39/C125, C47/C103, C51/C105, and C108/C115. Residue N43 is glycosylated (N-linked (GlcNAc...) asparagine). A propeptide spanning residues 133-138 (VVGFSI) is cleaved from the precursor.

Belongs to the glycoprotein hormones subunit beta family. In terms of assembly, heterodimer of a common alpha chain and a unique beta chain which confers biological specificity to thyrotropin, lutropin, follitropin and gonadotropin.

It localises to the secreted. Its function is as follows. Indispensable for the control of thyroid structure and metabolism. This Canis lupus familiaris (Dog) protein is Thyrotropin subunit beta (TSHB).